The chain runs to 312 residues: Protoheme IX farnesyltransferase (312 aa).

The next 8 helical transmembrane spans lie at 31–51 (VMSLVVFTALVGLLMAPGSFH), 52–72 (PVLAITAIICIAVGGGAAGAL), 119–139 (ILVNWIAAGLLAFTIFFYVVI), 152–172 (IVIGGAAGALPPVVAWASVTG), 179–199 (ILLFLIIFFWTPPHFWALALF), 225–245 (ILLYTVALVAVAAAPWPLGYF), 247–267 (VIYGVASLALGGWMLVLAVRV), and 288–308 (ILYLFALFAILLVEVVAAAVL).

It belongs to the UbiA prenyltransferase family. Protoheme IX farnesyltransferase subfamily.

Its subcellular location is the cell inner membrane. It catalyses the reaction heme b + (2E,6E)-farnesyl diphosphate + H2O = Fe(II)-heme o + diphosphate. It participates in porphyrin-containing compound metabolism; heme O biosynthesis; heme O from protoheme: step 1/1. Converts heme B (protoheme IX) to heme O by substitution of the vinyl group on carbon 2 of heme B porphyrin ring with a hydroxyethyl farnesyl side group. The protein is Protoheme IX farnesyltransferase of Rhodopseudomonas palustris (strain ATCC BAA-98 / CGA009).